The chain runs to 274 residues: MDTLLLLKAAIMGVVEGLTEFLPISSTGHLILAGSLLGFDDAKAKVFDIAIQTGAIFAVILVYWQRIRATLVALPTERQARRFALNVLIGFLPAVLLGLLLGKAIKAHLFTPVVVASTFILGGFVILWAERRQQAAVRIHAVDDMTPLDALKVGLVQCLAMVPGTSRSGATIIGGMLLGLSRKAATDYSFFLAIPTLIGAGVYSLYKERALLSAADIPLFAVGLVFSFISAWLCVRWLLRYISSHSFVPFAWYRIAFGLVVLVTAWSGLVTWAE.

A run of 6 helical transmembrane segments spans residues 44-64 (AKVFDIAIQTGAIFAVILVYW), 85-105 (LNVLIGFLPAVLLGLLLGKAI), 109-129 (LFTPVVVASTFILGGFVILWA), 185-205 (ATDYSFFLAIPTLIGAGVYSL), 215-235 (ADIPLFAVGLVFSFISAWLCV), and 250-270 (FAWYRIAFGLVVLVTAWSGLV).

It belongs to the UppP family.

The protein resides in the cell inner membrane. The enzyme catalyses di-trans,octa-cis-undecaprenyl diphosphate + H2O = di-trans,octa-cis-undecaprenyl phosphate + phosphate + H(+). In terms of biological role, catalyzes the dephosphorylation of undecaprenyl diphosphate (UPP). Confers resistance to bacitracin. This Acidovorax ebreus (strain TPSY) (Diaphorobacter sp. (strain TPSY)) protein is Undecaprenyl-diphosphatase.